The primary structure comprises 160 residues: Putative NrdI-like protein (160 aa).

It belongs to the NrdI family.

The chain is Putative NrdI-like protein from Streptococcus pyogenes serotype M6 (strain ATCC BAA-946 / MGAS10394).